A 159-amino-acid chain; its full sequence is U1 small nuclear ribonucleoprotein C (159 aa).

Residues 4 to 36 (FYCDYCDTYLTHDSPSVRKTHCSGRKHKENVKD) form a Matrin-type zinc finger. Disordered stretches follow at residues 63 to 95 (PPTP…MPAP) and 139 to 159 (MRPP…RPDR). Residues 77–95 (IPPPPSMGGPPRPGMMPAP) show a composition bias toward pro residues.

Belongs to the U1 small nuclear ribonucleoprotein C family. As to quaternary structure, component of the U1 snRNP. The U1 snRNP is composed of the U1 snRNA and the 7 core Sm proteins snrpb, snrpd1, snrpd2, snrpd3, snrpe, snrpf and snrpg that assemble in a heptameric protein ring on the Sm site of the small nuclear RNA to form the core snRNP, and at least 3 U1 snRNP-specific proteins snrnp70/U1-70K, snrpa/U1-A and snrpc/U1-C. snrpc/U1-C interacts with U1 snRNA and the 5' splice-site region of the pre-mRNA.

Its subcellular location is the nucleus. In terms of biological role, component of the spliceosomal U1 snRNP, which is essential for recognition of the pre-mRNA 5' splice-site and the subsequent assembly of the spliceosome. snrpc/U1-C is directly involved in initial 5' splice-site recognition for both constitutive and regulated alternative splicing. The interaction with the 5' splice-site seems to precede base-pairing between the pre-mRNA and the U1 snRNA. Stimulates commitment or early (E) complex formation by stabilizing the base pairing of the 5' end of the U1 snRNA and the 5' splice-site region. The protein is U1 small nuclear ribonucleoprotein C of Xenopus tropicalis (Western clawed frog).